Consider the following 470-residue polypeptide: uncharacterized protein (470 aa).

Residues 1–337 (MKFGHDFKRA…SLTAQPLFFQ (337 aa)) enclose the SPX domain. The segment at 118 to 145 (ASNVPSTPSDSTQQPPTNTLPSVSASSQ) is disordered. Low complexity predominate over residues 122–136 (PSTPSDSTQQPPTNT). An RING-type zinc finger spans residues 374–413 (CAICSNVAYKPVRLGCSHVFCLHCLIILQKQKVDFCPLCR).

It localises to the cytoplasm. This is an uncharacterized protein from Schizosaccharomyces pombe (strain 972 / ATCC 24843) (Fission yeast).